Here is a 493-residue protein sequence, read N- to C-terminus: Lysine--tRNA ligase (493 aa).

Glutamate 403 and glutamate 410 together coordinate Mg(2+).

The protein belongs to the class-II aminoacyl-tRNA synthetase family. Homodimer. Mg(2+) is required as a cofactor.

Its subcellular location is the cytoplasm. The enzyme catalyses tRNA(Lys) + L-lysine + ATP = L-lysyl-tRNA(Lys) + AMP + diphosphate. The chain is Lysine--tRNA ligase from Wigglesworthia glossinidia brevipalpis.